Consider the following 267-residue polypeptide: Hydroxyethylthiazole kinase (267 aa).

Position 42 (Met42) interacts with substrate. The ATP site is built by Cys118 and Thr162. Gly189 contacts substrate.

It belongs to the Thz kinase family. Mg(2+) is required as a cofactor.

It carries out the reaction 5-(2-hydroxyethyl)-4-methylthiazole + ATP = 4-methyl-5-(2-phosphooxyethyl)-thiazole + ADP + H(+). The protein operates within cofactor biosynthesis; thiamine diphosphate biosynthesis; 4-methyl-5-(2-phosphoethyl)-thiazole from 5-(2-hydroxyethyl)-4-methylthiazole: step 1/1. Its function is as follows. Catalyzes the phosphorylation of the hydroxyl group of 4-methyl-5-beta-hydroxyethylthiazole (THZ). The sequence is that of Hydroxyethylthiazole kinase from Rubrobacter xylanophilus (strain DSM 9941 / JCM 11954 / NBRC 16129 / PRD-1).